The following is a 389-amino-acid chain: Probable protein phosphatase 2C 12 (389 aa).

The PPM-type phosphatase domain maps to 42-356 (VASLFSQRGK…DDCSAVCLFL (315 aa)). Mn(2+)-binding residues include aspartate 77 and glycine 78. Positions 119–145 (AFSDDAAASSSADSSGNSSPQPSASAS) are disordered. Positions 121–145 (SDDAAASSSADSSGNSSPQPSASAS) are enriched in low complexity. The Mn(2+) site is built by aspartate 301 and aspartate 347.

Belongs to the PP2C family. Mg(2+) serves as cofactor. Requires Mn(2+) as cofactor.

It carries out the reaction O-phospho-L-seryl-[protein] + H2O = L-seryl-[protein] + phosphate. The enzyme catalyses O-phospho-L-threonyl-[protein] + H2O = L-threonyl-[protein] + phosphate. The chain is Probable protein phosphatase 2C 12 from Oryza sativa subsp. japonica (Rice).